The chain runs to 539 residues: Tripartite motif-containing protein 26 (539 aa).

An RING-type zinc finger spans residues 16 to 57; sequence CSICLDYLRDPVTIDCGHVFCRSCTTDVRPISGSRPVCPLCK. The segment at 97–138 adopts a B box-type zinc-finger fold; it reads QDAKLCERHREKLHYYCEDDGKLLCVMCRESREHRPHTAVLM. Zn(2+)-binding residues include cysteine 102, histidine 105, cysteine 124, and histidine 130. Residues 188–227 adopt a coiled-coil conformation; that stretch reads IVAEFEQGHQFLREREEHLLEQLAKLEQELTEGREKFKSR. Residues 295–539 form the B30.2/SPRY domain; it reads RGLREFQGKL…WPGTRLLLRP (245 aa). Residues 376 to 437 are disordered; it reads REGWSEDEEE…EEEEEVLESC (62 aa). The span at 380-434 shows a compositional bias: acidic residues; that stretch reads SEDEEEGDEEEEGEEEEEEEEAGYGDGYDDWETDEDEESLGDEEEEEEEEEEEVL.

Belongs to the TRIM/RBCC family. Interacts with TBK1; this interaction bridges together TBK1 and NEMO in order to activate TBK1. Interacts with INCA1. In terms of processing, autoubiquitinates upon viral infection. In turn, autoubiquitinated TRIM26 recruits NEMO and bridges TBK1-NEMO interaction.

It localises to the cytoplasm. Its subcellular location is the nucleus. The catalysed reaction is S-ubiquitinyl-[E2 ubiquitin-conjugating enzyme]-L-cysteine + [acceptor protein]-L-lysine = [E2 ubiquitin-conjugating enzyme]-L-cysteine + N(6)-ubiquitinyl-[acceptor protein]-L-lysine.. In terms of biological role, E3 ubiquitin-protein ligase which regulates the IFN-beta production and antiviral response downstream of various DNA-encoded pattern-recognition receptors (PRRs). Also plays a central role in determining the response to different forms of oxidative stress by controlling levels of DNA glycosylases NEIL1, NEIL3 and NTH1 that are involved in repair of damaged DNA. Promotes nuclear IRF3 ubiquitination and proteasomal degradation. Bridges together TBK1 and NEMO during the innate response to viral infection leading to the activation of TBK1. Positively regulates LPS-mediated inflammatory innate immune response by catalyzing the 'Lys-11'-linked polyubiquitination of TAB1 to enhance its activation and subsequent NF-kappa-B and MAPK signaling. In a manner independent of its catalytic activity, inhibits WWP2, a SOX2-directed E3 ubiquitin ligase, and thus protects SOX2 from polyubiquitination and proteasomal degradation. Ubiquitinates the histone acetyltransferase protein complex component PHF20 and thereby triggers its degradation in the nucleus after its recruitment by the histone demethylase KDM6B, serving as a scaffold protein. Upon induction by TGF-beta, ubiquitinates the TFIID component TAF7 for proteasomal degradation. Induces ferroptosis by ubiquitinating SLC7A11, a critical protein for lipid reactive oxygen species (ROS) scavenging. This chain is Tripartite motif-containing protein 26 (TRIM26), found in Pan troglodytes (Chimpanzee).